The chain runs to 314 residues: MWVAWSARTAALALLLGALHGAPTRGQEYDYYGWQAEPLHGRSYSKPPQCLDIPADLPLCHTVGYKRMRLPNLLEHESLAEVKQQASSWLPLLAKRCHSDTQVFLCSLFAPVCLDRPIYPCRSLCEAARAGCAPLMEAYGFPWPEMLHCHKFPLDNDLCIAVQFGHLPATAPPVTKICAQCEMEHSADGLMEQMCSSDFVVKMRIKEIKIDNGDRKLIGAQKKKKLLKAGPLKRKDTKKLVLHMKNGASCPCPQLDNLTGSFLVMGRKVEGQLLLTAVYRWDKKNKEMKFAVKFMFSYPCSLYYPFFYGAAEPH.

An N-terminal signal peptide occupies residues 1–21 (MWVAWSARTAALALLLGALHG). Positions 45-162 (SKPPQCLDIP…PLDNDLCIAV (118 aa)) constitute an FZ domain. 8 cysteine pairs are disulfide-bonded: Cys-50–Cys-113, Cys-60–Cys-106, Cys-97–Cys-132, Cys-121–Cys-159, Cys-125–Cys-149, Cys-178–Cys-250, Cys-181–Cys-252, and Cys-195–Cys-300. The NTR domain occupies 178–300 (CAQCEMEHSA…AVKFMFSYPC (123 aa)).

This sequence belongs to the secreted frizzled-related protein (sFRP) family.

It is found in the secreted. Functionally, soluble frizzled-related proteins (sFRPS) function as modulators of Wnt signaling through direct interaction with Wnts. They have a role in regulating cell growth and differentiation in specific cell types. SFRP5 may be involved in determining the polarity of photoreceptor, and perhaps, other cells in the retina. In Mus musculus (Mouse), this protein is Secreted frizzled-related protein 5 (Sfrp5).